Consider the following 175-residue polypeptide: MEELIAKRYATALSSVSKDVKSIASVLNVLSEAISVPEVHEALTSPIVSAEKKTDMILSAIGKEADATMVNFIKILGENKRLDLIPAIAKVLNADLQKESNQYEGVLKSSSELGKEELAKLEKTLETYTGSKIELKQEKTDLEGLRVSVDDLGIEVNFSKQRVKEQLIDFIKKSL.

Belongs to the ATPase delta chain family. In terms of assembly, F-type ATPases have 2 components, F(1) - the catalytic core - and F(0) - the membrane proton channel. F(1) has five subunits: alpha(3), beta(3), gamma(1), delta(1), epsilon(1). F(0) has three main subunits: a(1), b(2) and c(10-14). The alpha and beta chains form an alternating ring which encloses part of the gamma chain. F(1) is attached to F(0) by a central stalk formed by the gamma and epsilon chains, while a peripheral stalk is formed by the delta and b chains.

The protein resides in the cell inner membrane. Its function is as follows. F(1)F(0) ATP synthase produces ATP from ADP in the presence of a proton or sodium gradient. F-type ATPases consist of two structural domains, F(1) containing the extramembraneous catalytic core and F(0) containing the membrane proton channel, linked together by a central stalk and a peripheral stalk. During catalysis, ATP synthesis in the catalytic domain of F(1) is coupled via a rotary mechanism of the central stalk subunits to proton translocation. Functionally, this protein is part of the stalk that links CF(0) to CF(1). It either transmits conformational changes from CF(0) to CF(1) or is implicated in proton conduction. In Sulfurovum sp. (strain NBC37-1), this protein is ATP synthase subunit delta.